The sequence spans 577 residues: Hemagglutinin-neuraminidase (577 aa).

At 1–22 the chain is on the intravirion side; it reads MDRAVSQVALENDEREAKNTWR. Residues 23–45 form a helical membrane-spanning segment; that stretch reads LIFRIAILLLTVVTLATSVASLV. Residues 46-571 lie on the Virion surface side of the membrane; that stretch reads YSMGASTPSD…LVEILKNDGV (526 aa). Asn119 and Asn144 each carry an N-linked (GlcNAc...) asparagine; by host glycan. The tract at residues 124-152 is important for interaction with fusion/F protein; that stretch reads GAPIHDPDFIGGIGKELIVDNASDVTSFY. Intrachain disulfides connect Cys172–Cys196, Cys186–Cys247, and Cys238–Cys251. The involved in neuraminidase activity stretch occupies residues 234 to 239; that stretch reads NRKSCS. 2 N-linked (GlcNAc...) asparagine; by host glycosylation sites follow: Asn341 and Asn433. 2 cysteine pairs are disulfide-bonded: Cys344-Cys461 and Cys455-Cys465. N-linked (GlcNAc...) asparagine; by host glycosylation is found at Asn481 and Asn538. An intrachain disulfide couples Cys531 to Cys542.

It belongs to the paramyxoviruses hemagglutinin-neuraminidase family. In terms of assembly, homotetramer; composed of disulfide-linked homodimers. Interacts with F protein trimer. Interacts with host CG-1B; this interaction inhibits viral adsorption and replication rather than internalization.

It is found in the virion membrane. It localises to the host cell membrane. The enzyme catalyses Hydrolysis of alpha-(2-&gt;3)-, alpha-(2-&gt;6)-, alpha-(2-&gt;8)- glycosidic linkages of terminal sialic acid residues in oligosaccharides, glycoproteins, glycolipids, colominic acid and synthetic substrates.. Functionally, mediates the viral entry into the host cell together with fusion/F protein. Attaches the virus to sialic acid-containing cell receptors and thereby initiates infection. Binding of HN protein to the receptor induces a conformational change that allows the F protein to trigger virion/cell membranes fusion. Its function is as follows. Neuraminidase activity ensures the efficient spread of the virus by dissociating the mature virions from the neuraminic acid containing glycoproteins. This Gallus gallus (Chicken) protein is Hemagglutinin-neuraminidase (HN).